We begin with the raw amino-acid sequence, 525 residues long: Golgi resident protein GCP60 (525 aa).

Position 2 is an N-acetylalanine (A2). The segment at 12 to 68 is disordered; that stretch reads VSLDGLTLSPDSEERPGAEGAPPQTPPSSAPGNGLGSGASGQQREPGEAAAEGAAEE. S13 is modified (phosphoserine). T18 bears the Phosphothreonine mark. Phosphoserine is present on residues S20 and S40. Residues 52 to 64 are compositionally biased toward low complexity; sequence GQQREPGEAAAEG. The region spanning 80–171 is the ACB domain; sequence LEELYGLALR…LNKCCPLLSA (92 aa). Positions 169 to 254 form a coiled coil; that stretch reads LSAYVASHRI…AALNSQTAVQ (86 aa). Residues 180–226 are disordered; sequence KEEEEKRRKAEEERRQREEEERERLQKEEEKRKREKEDRLRREEEER. Positions 238–305 are q domain; Interaction with PI4KB, TBC1D22A and TBC1D22B; sequence QQKQQIMAAL…QQQAALQKQQ (68 aa). The segment covering 319–336 has biased composition (polar residues); it reads KVNTAGASDTLSVNGQAK. A disordered region spans residues 319 to 346; the sequence is KVNTAGASDTLSVNGQAKTHTENSEKVL. The span at 337–346 shows a compositional bias: basic and acidic residues; it reads THTENSEKVL. The region spanning 381–523 is the GOLD domain; that stretch reads KEKIRQDADS…SKSVYYRVYY (143 aa). Positions 448-470 form a coiled coil; it reads SDEEEEEEENVTCEEKAKKNANK.

Homodimer. Interacts with the C-terminal cytoplasmic domain of giantin/GOLGB1. Interacts with PBR and PKA regulatory subunit RI-alpha. Does not interact with PKA regulatory subunit RI-beta nor PKA regulatory subunit RII-alpha. Interacts (via Q domain) with PI4KB (via N-terminus). Interacts (via Q domain) with TBC1D22A and TBC1D22B; interactions with PI4KB and with TBC1D22A and TBC1D22B are mutually exclusive. Interacts with C10ORF76 and RAB11B. Expressed in brain (hippocampus, olfactory bulb, neuronal and glial cells of the cortex), eye, submaxillary gland, testis (interstitial and tubular compartments), ovary (granulosa cells, theca cells at late stages and primary follicles), adrenal gland (fasciculata and glomerulosa cells), heart, liver, and steroidogenic cell lines.

It localises to the golgi apparatus membrane. The protein localises to the mitochondrion. Functionally, involved in the maintenance of Golgi structure by interacting with giantin, affecting protein transport between the endoplasmic reticulum and Golgi. Involved in hormone-induced steroid biosynthesis in testicular Leydig cells. Recruits PI4KB to the Golgi apparatus membrane; enhances the enzyme activity of PI4KB activity via its membrane recruitment thereby increasing the local concentration of the substrate in the vicinity of the kinase. The sequence is that of Golgi resident protein GCP60 (Acbd3) from Mus musculus (Mouse).